Consider the following 1152-residue polypeptide: Calcium-activated potassium channel subunit alpha-1 (1152 aa).

The interval 1–37 is disordered; it reads MSSNIHANHLSLDASSSSSSSSSSSSSSSSSSSSVHE. The Extracellular portion of the chain corresponds to 1-60; that stretch reads MSSNIHANHLSLDASSSSSSSSSSSSSSSSSSSSVHEPKMDALIIPVTMEVPCDSRGQRM. The segment covering 15-34 has biased composition (low complexity); the sequence is SSSSSSSSSSSSSSSSSSSS. A helical transmembrane segment spans residues 61–81; the sequence is WWAFLASSMVTFFGGLFIILL. Over 82 to 152 the chain is Cytoplasmic; that stretch reads WRTLKYLWTV…MISAQTLTGR (71 aa). Residues cysteine 92, cysteine 93, and cysteine 95 are each lipidated (S-palmitoyl cysteine). The helical transmembrane segment at 153–173 threads the bilayer; the sequence is VLVVLVFALSIGALVIYFIDS. The Extracellular segment spans residues 174 to 188; that stretch reads SNPIESCQNFYKDFT. Residues 189 to 209 form a helical membrane-spanning segment; that stretch reads LQIDMAFNVFFLLYFGLRFIA. Topologically, residues 210–213 are cytoplasmic; sequence ANDK. The chain crosses the membrane as a helical span at residues 214-234; sequence LWFWLEVNSVVDFFTVPPVFV. The Extracellular segment spans residues 235 to 238; sequence SVYL. Residues 239 to 259 traverse the membrane as a helical; Voltage-sensor segment; sequence NRSWLGLRFLRALRLIQFSEI. Topologically, residues 260–274 are cytoplasmic; that stretch reads LQFLNILKTSNSIKL. A helical transmembrane segment spans residues 275-295; that stretch reads VNLLSIFISTWLTAAGFIHLV. Topologically, residues 296–309 are extracellular; the sequence is ENSGDPWENFQNNQ. An intramembrane region (pore-forming) is located at residues 310–332; that stretch reads ALTYWECVYLLMVTMSTVGYGDV. A Selectivity for potassium motif is present at residues 326–329; the sequence is TVGY. Residues 333–341 lie on the Extracellular side of the membrane; it reads YAKTTLGRL. The chain crosses the membrane as a helical span at residues 342–362; sequence FMVFFILGGLAMFASYVPEII. Residues 363–1152 are Cytoplasmic-facing; that stretch reads ELIGNRKKYG…KQKYVQEERL (790 aa). Positions 381–523 constitute an RCK N-terminal 1 domain; it reads RKHIVVCGHI…WNWKEGDDAI (143 aa). Glutamate 413, glutamine 436, and glutamate 438 together coordinate Mg(2+). Positions 530–550 are segment S7; the sequence is LGFIAQSCLAQGLSTMLANLF. The segment at 587–607 is segment S8; the sequence is LSFPTVCELCFVKLKLLMIAI. The heme-binding motif stretch occupies residues 651-655; the sequence is CKACH. The interval 675–703 is disordered; the sequence is EQPSTLSPKKKQRNGGMRNSPSSSPKLMR. Threonine 679 is modified (phosphothreonine). Phosphoserine occurs at positions 681, 694, and 698. The tract at residues 753–773 is segment S9; sequence VLSGHVVVCIFGDVSSALIGL. The RCK N-terminal 2 domain occupies 755–899; the sequence is SGHVVVCIFG…MDRSSPDNSP (145 aa). Threonine 886 carries the phosphothreonine modification. A phosphoserine mark is found at serine 894 and serine 898. A Calcium bowl motif is present at residues 919 to 941; the sequence is TELVNDTNVQFLDQDDDDDPDTE. Ca(2+)-binding residues include glutamine 928, aspartate 931, aspartate 934, and aspartate 936. Residues 948-968 are segment S10; the sequence is FACGTAFAVSVLDSLMSATYF. Over residues 1102–1127 the composition is skewed to low complexity; sequence RASLSHSSHSSQSSSKKSSSVHSIPS. The segment at 1102–1152 is disordered; it reads RASLSHSSHSSQSSSKKSSSVHSIPSTANRQNRPKSRESRDKQKYVQEERL. Basic and acidic residues predominate over residues 1136–1152; it reads KSRESRDKQKYVQEERL. Phosphoserine is present on residues serine 1137 and serine 1140.

Belongs to the potassium channel family. Calcium-activated (TC 1.A.1.3) subfamily. KCa1.1/KCNMA1 sub-subfamily. Homotetramer; which constitutes the calcium-activated potassium channel. Interacts with beta subunits KCNMB1, KCNMB2, KCNMB3 and KCNMB4. Interacts with gamma subunits LRRC26, LRRC38, LRRC52 and LRRC55. Beta and gamma subunits are accessory, and modulate its activity. Interacts with RAB11B. Phosphorylated. Phosphorylation by kinases such as PKA and/or PKG. In smooth muscles, phosphorylation affects its activity. Post-translationally, palmitoylation by ZDHHC22 and ZDHHC23 within the intracellular linker between the S0 and S1 transmembrane domains regulates localization to the plasma membrane. Depalmitoylated by LYPLA1 and LYPLAL1, leading to retard exit from the trans-Golgi network.

The protein localises to the cell membrane. It catalyses the reaction K(+)(in) = K(+)(out). Ethanol and carbon monoxide-bound heme increase channel activation. Heme inhibits channel activation. Functionally, potassium channel activated by both membrane depolarization or increase in cytosolic Ca(2+) that mediates export of K(+). It is also activated by the concentration of cytosolic Mg(2+). Its activation dampens the excitatory events that elevate the cytosolic Ca(2+) concentration and/or depolarize the cell membrane. It therefore contributes to repolarization of the membrane potential. Plays a key role in controlling excitability in a number of systems, such as regulation of the contraction of smooth muscle, the tuning of hair cells in the cochlea, regulation of transmitter release, and innate immunity. In smooth muscles, its activation by high level of Ca(2+), caused by ryanodine receptors in the sarcoplasmic reticulum, regulates the membrane potential. In cochlea cells, its number and kinetic properties partly determine the characteristic frequency of each hair cell and thereby helps to establish a tonotopic map. Kinetics of KCNMA1 channels are determined by alternative splicing, phosphorylation status and its combination with modulating beta subunits. Highly sensitive to both iberiotoxin (IbTx) and charybdotoxin (CTX). This chain is Calcium-activated potassium channel subunit alpha-1 (KCNMA1), found in Sus scrofa (Pig).